A 741-amino-acid chain; its full sequence is Cytosolic phospholipase A2 (741 aa).

The region spanning 1 to 116 (MSNIIVEHQY…KVAQMEHVTL (116 aa)) is the C2 domain. Positions 1–172 (MSNIIVEHQY…IKKLLKMENP (172 aa)) are phospholipid binding. Ca(2+) is bound by residues Asp-34, Thr-35, Asp-37, Asn-59, Asp-87, Ala-88, and Asn-89. The PLA2c domain occupies 132–729 (VCASTDLRFS…SLSEIENKKF (598 aa)). Ser-223 (nucleophile) is an active-site residue. Residues 406-453 (TSSSTMEEELEQIKPEHIVGDDSADNEEETQRGGTESADAEDERQRHA) are disordered. Basic and acidic residues predominate over residues 416–425 (EQIKPEHIVG). Ser-498 is subject to Phosphoserine; by MAPK. Asp-540 functions as the Proton acceptor in the catalytic mechanism.

Post-translationally, activated by phosphorylation on a serine residue.

The protein localises to the cytoplasm. The protein resides in the cytoplasmic vesicle. The enzyme catalyses a 1,2-diacyl-sn-glycero-3-phosphocholine + H2O = a 1-acyl-sn-glycero-3-phosphocholine + a fatty acid + H(+). It catalyses the reaction a 1-acyl-sn-glycero-3-phosphocholine + H2O = sn-glycerol 3-phosphocholine + a fatty acid + H(+). Stimulated by agonists such as ATP, EGF, thrombin and bradykinin as well as by cytosolic Ca(2+). Its function is as follows. Selectively hydrolyzes arachidonyl phospholipids in the sn-2 position releasing arachidonic acid. Together with its lysophospholipid activity, it is implicated in the initiation of the inflammatory response. This chain is Cytosolic phospholipase A2 (pla2g4a), found in Danio rerio (Zebrafish).